We begin with the raw amino-acid sequence, 220 residues long: Adenylate kinase (220 aa).

Glycine 10 to threonine 15 is an ATP binding site. The tract at residues serine 30–valine 59 is NMP. AMP contacts are provided by residues threonine 31, arginine 36, glycine 57–valine 59, glycine 85–arginine 88, and glutamine 92. An LID region spans residues glycine 126–aspartate 163. Arginine 127 is an ATP binding site. The Zn(2+) site is built by cysteine 130, cysteine 133, cysteine 150, and cysteine 153. The AMP site is built by arginine 160 and arginine 171. Leucine 199 lines the ATP pocket.

The protein belongs to the adenylate kinase family. In terms of assembly, monomer.

The protein localises to the cytoplasm. The enzyme catalyses AMP + ATP = 2 ADP. It functions in the pathway purine metabolism; AMP biosynthesis via salvage pathway; AMP from ADP: step 1/1. In terms of biological role, catalyzes the reversible transfer of the terminal phosphate group between ATP and AMP. Plays an important role in cellular energy homeostasis and in adenine nucleotide metabolism. This chain is Adenylate kinase, found in Pelobacter propionicus (strain DSM 2379 / NBRC 103807 / OttBd1).